A 615-amino-acid polypeptide reads, in one-letter code: Chaperone protein DnaK (615 aa).

Phosphothreonine; by autocatalysis is present on T177. The segment at 567–615 (TKESQGIAMKAYQKAQEKQAQEKGTQENTTAKNEKPQDEVVDADFEEKK) is disordered. Over residues 581-591 (AQEKQAQEKGT) the composition is skewed to basic and acidic residues. The segment covering 605–615 (EVVDADFEEKK) has biased composition (acidic residues).

This sequence belongs to the heat shock protein 70 family.

Its function is as follows. Acts as a chaperone. The polypeptide is Chaperone protein DnaK (Onion yellows phytoplasma (strain OY-M)).